A 219-amino-acid chain; its full sequence is Octanoyltransferase (219 aa).

In terms of domain architecture, BPL/LPL catalytic spans 31 to 206 (DEDVDQIWLV…ELVELLGYDQ (176 aa)). Substrate is bound by residues 70–77 (RGGQVTYH), 137–139 (SLG), and 150–152 (GLA). The Acyl-thioester intermediate role is filled by C168.

This sequence belongs to the LipB family.

Its subcellular location is the cytoplasm. The catalysed reaction is octanoyl-[ACP] + L-lysyl-[protein] = N(6)-octanoyl-L-lysyl-[protein] + holo-[ACP] + H(+). Its pathway is protein modification; protein lipoylation via endogenous pathway; protein N(6)-(lipoyl)lysine from octanoyl-[acyl-carrier-protein]: step 1/2. Functionally, catalyzes the transfer of endogenously produced octanoic acid from octanoyl-acyl-carrier-protein onto the lipoyl domains of lipoate-dependent enzymes. Lipoyl-ACP can also act as a substrate although octanoyl-ACP is likely to be the physiological substrate. The protein is Octanoyltransferase of Vibrio atlanticus (strain LGP32) (Vibrio splendidus (strain Mel32)).